A 505-amino-acid polypeptide reads, in one-letter code: tRNA-2-methylthio-N(6)-dimethylallyladenosine synthase (505 aa).

The region spanning 14 to 132 (RTYEVRTYGC…LPVLLERARV (119 aa)) is the MTTase N-terminal domain. The [4Fe-4S] cluster site is built by cysteine 23, cysteine 61, cysteine 95, cysteine 169, cysteine 173, and cysteine 176. A Radical SAM core domain is found at 155–386 (RESAYAAWVS…ALQEEISWEE (232 aa)). The TRAM domain occupies 388–456 (KKQVGRTLEL…PHHLLAEGPV (69 aa)).

Belongs to the methylthiotransferase family. MiaB subfamily. As to quaternary structure, monomer. [4Fe-4S] cluster serves as cofactor.

Its subcellular location is the cytoplasm. It carries out the reaction N(6)-dimethylallyladenosine(37) in tRNA + (sulfur carrier)-SH + AH2 + 2 S-adenosyl-L-methionine = 2-methylsulfanyl-N(6)-dimethylallyladenosine(37) in tRNA + (sulfur carrier)-H + 5'-deoxyadenosine + L-methionine + A + S-adenosyl-L-homocysteine + 2 H(+). Catalyzes the methylthiolation of N6-(dimethylallyl)adenosine (i(6)A), leading to the formation of 2-methylthio-N6-(dimethylallyl)adenosine (ms(2)i(6)A) at position 37 in tRNAs that read codons beginning with uridine. This is tRNA-2-methylthio-N(6)-dimethylallyladenosine synthase from Streptomyces viridosporus (strain ATCC 14672 / DSM 40746 / JCM 4963 / KCTC 9882 / NRRL B-12104 / FH 1290) (Streptomyces ghanaensis).